A 396-amino-acid polypeptide reads, in one-letter code: D-alanine--D-alanine ligase (396 aa).

The region spanning 141 to 347 (KMLWQAAGLP…PQDLMAQLLS (207 aa)) is the ATP-grasp domain. Residue 174–229 (ETRLGYPLFVKPAQAGSSVGASAVQTRAPLIPAIEAAFQWDEVVLVERYVRAREIE) coordinates ATP. Mg(2+) is bound by residues aspartate 301, glutamate 314, and asparagine 316. Residues 374–396 (AAHDPDAQGDDWDQRDSNPLPTA) form a disordered region.

The protein belongs to the D-alanine--D-alanine ligase family. Requires Mg(2+) as cofactor. It depends on Mn(2+) as a cofactor.

It localises to the cytoplasm. The catalysed reaction is 2 D-alanine + ATP = D-alanyl-D-alanine + ADP + phosphate + H(+). It participates in cell wall biogenesis; peptidoglycan biosynthesis. Its function is as follows. Cell wall formation. The chain is D-alanine--D-alanine ligase from Treponema pallidum (strain Nichols).